Consider the following 344-residue polypeptide: Aurora kinase B (344 aa).

A Phosphothreonine modification is found at T35. The segment at 46 to 65 is disordered; that stretch reads NAQPTAAPGQKVVENSSGTP. Residue S62 is modified to Phosphoserine. T64 is subject to Phosphothreonine. One can recognise a Protein kinase domain in the interval 77–327; sequence FEIGRPLGKG…LAQVSAHPWV (251 aa). ATP contacts are provided by residues 83–91 and K106; that span reads LGKGKFGNV. D200 serves as the catalytic Proton acceptor. K215 carries the N6-acetyllysine modification. Position 227 is a phosphoserine (S227). A Phosphothreonine; by autocatalysis modification is found at T232.

The protein belongs to the protein kinase superfamily. Ser/Thr protein kinase family. Aurora subfamily. Component of the chromosomal passenger complex (CPC) composed of at least BIRC5/survivin, CDCA8/borealin, INCENP, AURKB or AURKC; predominantly independent AURKB- and AURKC-containing complexes exist. Associates with RACGAP1 during M phase. Interacts with SPDYC; this interaction may be required for proper localization of active, Thr-232-phosphorylated AURKB form during prometaphase and metaphase. Interacts with p53/TP53. Interacts (via the middle kinase domain) with NOC2L (via the N- and C-terminus domains). Interacts with CDCA1. Interacts with EVI5. Interacts with JTB. Interacts with NDC80. Interacts with PSMA3. Interacts with RNF2/RING1B. Interacts with SEPTIN1. Interacts with SIRT2. Interacts with TACC1. Interacts with TTC28. The phosphorylation of Thr-232 requires the binding to INCENP and occurs by means of an autophosphorylation mechanism. Thr-232 phosphorylation is indispensable for the AURKB kinase activity. Post-translationally, acetylated at Lys-215 by KAT5 at kinetochores, increasing AURKB activity and promoting accurate chromosome segregation in mitosis. In terms of processing, ubiquitinated by different BCR (BTB-CUL3-RBX1) E3 ubiquitin ligase complexes. Ubiquitinated by the BCR(KLHL9-KLHL13) E3 ubiquitin ligase complex, ubiquitination leads to removal from mitotic chromosomes and is required for cytokinesis. During anaphase, the BCR(KLHL21) E3 ubiquitin ligase complex recruits the CPC complex from chromosomes to the spindle midzone and mediates the ubiquitination of AURKB. Ubiquitination of AURKB by BCR(KLHL21) E3 ubiquitin ligase complex may not lead to its degradation by the proteasome. Deubiquitinated by USP35; inhibiting CDH1-mediated degradation of AURKB.

Its subcellular location is the nucleus. It localises to the chromosome. It is found in the centromere. The protein resides in the kinetochore. The protein localises to the cytoplasm. Its subcellular location is the cytoskeleton. It localises to the spindle. It is found in the midbody. It catalyses the reaction L-seryl-[protein] + ATP = O-phospho-L-seryl-[protein] + ADP + H(+). The catalysed reaction is L-threonyl-[protein] + ATP = O-phospho-L-threonyl-[protein] + ADP + H(+). Activity is greatly increased when AURKB is within the CPC complex. In particular, AURKB-phosphorylated INCENP acts as an activator of AURKB. Positive feedback between HASPIN and AURKB contributes to CPC localization. Its function is as follows. Serine/threonine-protein kinase component of the chromosomal passenger complex (CPC), a complex that acts as a key regulator of mitosis. The CPC complex has essential functions at the centromere in ensuring correct chromosome alignment and segregation and is required for chromatin-induced microtubule stabilization and spindle assembly. Involved in the bipolar attachment of spindle microtubules to kinetochores and is a key regulator for the onset of cytokinesis during mitosis. Required for central/midzone spindle assembly and cleavage furrow formation. Key component of the cytokinesis checkpoint, a process required to delay abscission to prevent both premature resolution of intercellular chromosome bridges and accumulation of DNA damage: phosphorylates CHMP4C, leading to retain abscission-competent VPS4 (VPS4A and/or VPS4B) at the midbody ring until abscission checkpoint signaling is terminated at late cytokinesis. AURKB phosphorylates the CPC complex subunits BIRC5/survivin, CDCA8/borealin and INCENP. Phosphorylation of INCENP leads to increased AURKB activity. Other known AURKB substrates involved in centromeric functions and mitosis are CENPA, DES/desmin, GPAF, KIF2C, NSUN2, RACGAP1, SEPTIN1, VIM/vimentin, HASPIN, and histone H3. A positive feedback loop involving HASPIN and AURKB contributes to localization of CPC to centromeres. Phosphorylation of VIM controls vimentin filament segregation in cytokinetic process, whereas histone H3 is phosphorylated at 'Ser-10' and 'Ser-28' during mitosis (H3S10ph and H3S28ph, respectively). AURKB is also required for kinetochore localization of BUB1 and SGO1. Phosphorylation of p53/TP53 negatively regulates its transcriptional activity. Key regulator of active promoters in resting B- and T-lymphocytes: acts by mediating phosphorylation of H3S28ph at active promoters in resting B-cells, inhibiting RNF2/RING1B-mediated ubiquitination of histone H2A and enhancing binding and activity of the USP16 deubiquitinase at transcribed genes. Acts as an inhibitor of CGAS during mitosis: catalyzes phosphorylation of the N-terminus of CGAS during the G2-M transition, blocking CGAS liquid phase separation and activation, and thereby preventing CGAS-induced autoimmunity. Phosphorylates KRT5 during anaphase and telophase. Phosphorylates ATXN10 which promotes phosphorylation of ATXN10 by PLK1 and may play a role in the regulation of cytokinesis and stimulating the proteasomal degradation of ATXN10. This chain is Aurora kinase B (AURKB), found in Bos taurus (Bovine).